Here is a 179-residue protein sequence, read N- to C-terminus: Ribosome maturation factor RimM (179 aa).

Residues 96–179 (DNEFYWVDLI…KITVDWGLDY (84 aa)) form the PRC barrel domain.

The protein belongs to the RimM family. As to quaternary structure, binds ribosomal protein uS19.

It is found in the cytoplasm. In terms of biological role, an accessory protein needed during the final step in the assembly of 30S ribosomal subunit, possibly for assembly of the head region. Essential for efficient processing of 16S rRNA. May be needed both before and after RbfA during the maturation of 16S rRNA. It has affinity for free ribosomal 30S subunits but not for 70S ribosomes. The polypeptide is Ribosome maturation factor RimM (Janthinobacterium sp. (strain Marseille) (Minibacterium massiliensis)).